Reading from the N-terminus, the 394-residue chain is uncharacterized protein (394 aa).

Residues Asn-3, Asn-14, Asn-20, and Asn-25 are each glycosylated (N-linked (GlcNAc...) asparagine). 6 helical membrane passes run 64–84 (AVGI…LVNI), 101–121 (FIWI…YIDV), 133–153 (IFSF…WHVI), 180–200 (IFVV…MGFF), 228–248 (VLLA…SFVY), and 256–276 (WVGM…QFLE). 2 N-linked (GlcNAc...) asparagine glycosylation sites follow: Asn-283 and Asn-286. Residues 291 to 311 (AGLVFGLGFCPPLILAYTVCI) traverse the membrane as a helical segment. N-linked (GlcNAc...) asparagine glycosylation is present at Asn-344.

It is found in the membrane. This is an uncharacterized protein from Schizosaccharomyces pombe (strain 972 / ATCC 24843) (Fission yeast).